A 231-amino-acid polypeptide reads, in one-letter code: Uracil-DNA glycosylase (231 aa).

Residue aspartate 74 is the Proton acceptor of the active site.

Belongs to the uracil-DNA glycosylase (UDG) superfamily. UNG family.

Its subcellular location is the cytoplasm. The enzyme catalyses Hydrolyzes single-stranded DNA or mismatched double-stranded DNA and polynucleotides, releasing free uracil.. Excises uracil residues from the DNA which can arise as a result of misincorporation of dUMP residues by DNA polymerase or due to deamination of cytosine. In Campylobacter jejuni subsp. jejuni serotype O:23/36 (strain 81-176), this protein is Uracil-DNA glycosylase.